We begin with the raw amino-acid sequence, 109 residues long: Flagellar hook-basal body complex protein FliE 2 (109 aa).

This sequence belongs to the FliE family.

The protein resides in the bacterial flagellum basal body. The chain is Flagellar hook-basal body complex protein FliE 2 (fliE2) from Bradyrhizobium diazoefficiens (strain JCM 10833 / BCRC 13528 / IAM 13628 / NBRC 14792 / USDA 110).